The following is an 82-amino-acid chain: Small ribosomal subunit protein bS18 (82 aa).

It belongs to the bacterial ribosomal protein bS18 family. Part of the 30S ribosomal subunit. Forms a tight heterodimer with protein bS6.

In terms of biological role, binds as a heterodimer with protein bS6 to the central domain of the 16S rRNA, where it helps stabilize the platform of the 30S subunit. The protein is Small ribosomal subunit protein bS18 of Bifidobacterium longum (strain NCC 2705).